We begin with the raw amino-acid sequence, 141 residues long: Large ribosomal subunit protein uL11 (141 aa).

The protein belongs to the universal ribosomal protein uL11 family. Part of the ribosomal stalk of the 50S ribosomal subunit. Interacts with L10 and the large rRNA to form the base of the stalk. L10 forms an elongated spine to which L12 dimers bind in a sequential fashion forming a multimeric L10(L12)X complex. Post-translationally, one or more lysine residues are methylated.

Its function is as follows. Forms part of the ribosomal stalk which helps the ribosome interact with GTP-bound translation factors. This Natranaerobius thermophilus (strain ATCC BAA-1301 / DSM 18059 / JW/NM-WN-LF) protein is Large ribosomal subunit protein uL11.